The following is a 158-amino-acid chain: UPF0758 protein YkfG (158 aa).

The MPN domain maps to 36–158 (AFTSTHAVRE…IYSFAEHGLL (123 aa)). Positions 107, 109, and 120 each coordinate Zn(2+). The short motif at 107–120 (HNHPSGETTPSQAD) is the JAMM motif element.

Belongs to the UPF0758 family.

This chain is UPF0758 protein YkfG (ykfG), found in Escherichia coli (strain K12).